The primary structure comprises 274 residues: 2-dehydro-3-deoxyphosphooctonate aldolase (274 aa).

It belongs to the KdsA family.

The protein resides in the cytoplasm. It catalyses the reaction D-arabinose 5-phosphate + phosphoenolpyruvate + H2O = 3-deoxy-alpha-D-manno-2-octulosonate-8-phosphate + phosphate. It functions in the pathway carbohydrate biosynthesis; 3-deoxy-D-manno-octulosonate biosynthesis; 3-deoxy-D-manno-octulosonate from D-ribulose 5-phosphate: step 2/3. Its pathway is bacterial outer membrane biogenesis; lipopolysaccharide biosynthesis. The chain is 2-dehydro-3-deoxyphosphooctonate aldolase from Legionella pneumophila (strain Lens).